We begin with the raw amino-acid sequence, 567 residues long: Urease subunit alpha (567 aa).

Residues G128–F567 form the Urease domain. The Ni(2+) site is built by H133, H135, and K216. At K216 the chain carries N6-carboxylysine. Residue H218 participates in substrate binding. Positions 245 and 271 each coordinate Ni(2+). Catalysis depends on H319, which acts as the Proton donor. A Ni(2+)-binding site is contributed by D359.

Belongs to the metallo-dependent hydrolases superfamily. Urease alpha subunit family. In terms of assembly, heterotrimer of UreA (gamma), UreB (beta) and UreC (alpha) subunits. Three heterotrimers associate to form the active enzyme. Ni cation serves as cofactor. Post-translationally, carboxylation allows a single lysine to coordinate two nickel ions.

Its subcellular location is the cytoplasm. It carries out the reaction urea + 2 H2O + H(+) = hydrogencarbonate + 2 NH4(+). The protein operates within nitrogen metabolism; urea degradation; CO(2) and NH(3) from urea (urease route): step 1/1. This is Urease subunit alpha from Blochmanniella pennsylvanica (strain BPEN).